A 613-amino-acid chain; its full sequence is Forkhead box protein O (613 aa).

4 disordered regions span residues 39–90 (RARS…KNSS), 182–205 (KSVR…RAKK), 217–269 (GLND…RLSP), and 317–360 (QGFS…PASG). Thr44 is modified (phosphothreonine; by PKB/AKT1). The segment covering 63-80 (TKASNQQLAPGDSQQAIQ) has biased composition (polar residues). Residue Ser75 is modified to Phosphoserine. The segment covering 81-90 (NANAAKKNSS) has biased composition (low complexity). Positions 95–201 (WGNLSYADLI…ETSRYEKRRG (107 aa)) form a DNA-binding region, fork-head. Ser190 is modified (phosphoserine; by PKB/AKT1). Composition is skewed to polar residues over residues 221 to 230 (ATPSPSSSVS) and 256 to 265 (RASSNASSCG). Ser259 is subject to Phosphoserine; by PKB/AKT1. Phosphoserine is present on residues Ser262, Ser263, and Ser268. Positions 327 to 336 (SQPPPPPYQP) are enriched in pro residues. The segment covering 337–353 (PQHQQAQQQQQQQSPYA) has biased composition (low complexity).

As to quaternary structure, interacts with melt.

It is found in the cytoplasm. It localises to the nucleus. Its function is as follows. Transcription factor involved in the regulation of the insulin signaling pathway. Consistently activates both the downstream target Thor\d4EBP and the feedback control target InR. Involved in negative regulation of the cell cycle, modulating cell growth and proliferation. In response to cellular stresses, such as nutrient deprivation or increased levels of reactive oxygen species, foxo is activated and inhibits growth through the action of target genes such as Thor. Foxo activated in the adult fat body can regulate lifespan in adults; an insulin peptide itself may function as one secondary messenger of insulin-regulated aging. Also regulates Lip4, homolog of human acid lipases, thereby acting as a key modulator of lipid metabolism by insulin signaling and integrates insulin responses to glucose and lipid homeostasis. In Drosophila melanogaster (Fruit fly), this protein is Forkhead box protein O.